The sequence spans 390 residues: Elongation factor Tu 1 (390 aa).

The 192-residue stretch at 10–201 (KPHVNVGTIG…LDEYVAVPPR (192 aa)) folds into the tr-type G domain. Residues 19 to 26 (GHVDHGKT) are G1. 19–26 (GHVDHGKT) serves as a coordination point for GTP. Threonine 26 contacts Mg(2+). Residues 55 to 59 (GITIA) form a G2 region. The segment at 76-79 (DCPG) is G3. Residues 76–80 (DCPGH) and 131–134 (NKAD) each bind GTP. Residues 131-134 (NKAD) are G4. The tract at residues 168–170 (SAL) is G5.

It belongs to the TRAFAC class translation factor GTPase superfamily. Classic translation factor GTPase family. EF-Tu/EF-1A subfamily. Monomer.

It is found in the cytoplasm. The catalysed reaction is GTP + H2O = GDP + phosphate + H(+). In terms of biological role, GTP hydrolase that promotes the GTP-dependent binding of aminoacyl-tRNA to the A-site of ribosomes during protein biosynthesis. The chain is Elongation factor Tu 1 from Wolbachia pipientis wMel.